A 480-amino-acid polypeptide reads, in one-letter code: Proline--tRNA ligase (480 aa).

The protein belongs to the class-II aminoacyl-tRNA synthetase family. ProS type 3 subfamily. As to quaternary structure, homodimer.

The protein resides in the cytoplasm. It catalyses the reaction tRNA(Pro) + L-proline + ATP = L-prolyl-tRNA(Pro) + AMP + diphosphate. Its function is as follows. Catalyzes the attachment of proline to tRNA(Pro) in a two-step reaction: proline is first activated by ATP to form Pro-AMP and then transferred to the acceptor end of tRNA(Pro). This chain is Proline--tRNA ligase, found in Pyrococcus horikoshii (strain ATCC 700860 / DSM 12428 / JCM 9974 / NBRC 100139 / OT-3).